Here is a 180-residue protein sequence, read N- to C-terminus: Large ribosomal subunit protein uL5 (180 aa).

The protein belongs to the universal ribosomal protein uL5 family. As to quaternary structure, part of the 50S ribosomal subunit; part of the 5S rRNA/L5/L18/L25 subcomplex. Contacts the 5S rRNA and the P site tRNA. Forms a bridge to the 30S subunit in the 70S ribosome.

Functionally, this is one of the proteins that bind and probably mediate the attachment of the 5S RNA into the large ribosomal subunit, where it forms part of the central protuberance. In the 70S ribosome it contacts protein S13 of the 30S subunit (bridge B1b), connecting the 2 subunits; this bridge is implicated in subunit movement. Contacts the P site tRNA; the 5S rRNA and some of its associated proteins might help stabilize positioning of ribosome-bound tRNAs. The sequence is that of Large ribosomal subunit protein uL5 from Streptococcus agalactiae serotype Ia (strain ATCC 27591 / A909 / CDC SS700).